The sequence spans 389 residues: uncharacterized protein (389 aa).

Over residues Met-1–Glu-12 the composition is skewed to polar residues. 2 disordered regions span residues Met-1–Leu-49 and His-86–Ala-111. Residues Glu-40–Leu-49 are compositionally biased toward acidic residues. Positions Arg-93–Arg-110 are enriched in basic residues.

This is an uncharacterized protein from Caenorhabditis elegans.